Reading from the N-terminus, the 115-residue chain is Regulator of ribonuclease activity B (115 aa).

It belongs to the RraB family. As to quaternary structure, interacts with the C-terminal region of Rne.

The protein resides in the cytoplasm. Its function is as follows. Globally modulates RNA abundance by binding to RNase E (Rne) and regulating its endonucleolytic activity. Can modulate Rne action in a substrate-dependent manner by altering the composition of the degradosome. The sequence is that of Regulator of ribonuclease activity B from Aeromonas hydrophila subsp. hydrophila (strain ATCC 7966 / DSM 30187 / BCRC 13018 / CCUG 14551 / JCM 1027 / KCTC 2358 / NCIMB 9240 / NCTC 8049).